The chain runs to 330 residues: MKVFYDSDFKLDALKEKTIAVIGYGSQGRAQSLNMKDSGLNVVVGLRKNGASWENAKADGHNVMTIEEAAEKADIIHILIPDELQAEVYDAQIKPYLKEGKTLSFSHGFNIHYGFIVPPKGVNVVLVAPKSPGKMVRRTYEEGFGVPGLICIEIDATNNAFDIVSAMAKGIGLSRAGVIQTTFKEETETDLFGEQAVLCGGVTELIKAGFETLVEAGYAPEMAYFETCHELKLIVDLIYQKGFKNMWNDVSNTAEYGGLTRRSRIVTADSKAAMKEILKEIQDGRFTKEFVLEKQVNHAHLKAMRRLEGELQIEEVGAKLRKMCGLEKEE.

The 181-residue stretch at 1–181 folds into the KARI N-terminal Rossmann domain; the sequence is MKVFYDSDFK…GLSRAGVIQT (181 aa). Residues 24 to 27, arginine 47, serine 52, and 82 to 85 each bind NADP(+); these read YGSQ and DELQ. Histidine 107 is a catalytic residue. Glycine 133 contributes to the NADP(+) binding site. One can recognise a KARI C-terminal knotted domain in the interval 182 to 327; the sequence is TFKEETETDL…AKLRKMCGLE (146 aa). Positions 190, 194, 226, and 230 each coordinate Mg(2+). Serine 251 contacts substrate.

It belongs to the ketol-acid reductoisomerase family. Mg(2+) serves as cofactor.

It catalyses the reaction (2R)-2,3-dihydroxy-3-methylbutanoate + NADP(+) = (2S)-2-acetolactate + NADPH + H(+). The enzyme catalyses (2R,3R)-2,3-dihydroxy-3-methylpentanoate + NADP(+) = (S)-2-ethyl-2-hydroxy-3-oxobutanoate + NADPH + H(+). The protein operates within amino-acid biosynthesis; L-isoleucine biosynthesis; L-isoleucine from 2-oxobutanoate: step 2/4. It functions in the pathway amino-acid biosynthesis; L-valine biosynthesis; L-valine from pyruvate: step 2/4. In terms of biological role, involved in the biosynthesis of branched-chain amino acids (BCAA). Catalyzes an alkyl-migration followed by a ketol-acid reduction of (S)-2-acetolactate (S2AL) to yield (R)-2,3-dihydroxy-isovalerate. In the isomerase reaction, S2AL is rearranged via a Mg-dependent methyl migration to produce 3-hydroxy-3-methyl-2-ketobutyrate (HMKB). In the reductase reaction, this 2-ketoacid undergoes a metal-dependent reduction by NADPH to yield (R)-2,3-dihydroxy-isovalerate. The chain is Ketol-acid reductoisomerase (NADP(+)) from Methanococcus maripaludis (strain C7 / ATCC BAA-1331).